Consider the following 417-residue polypeptide: Serpin A9 (417 aa).

A signal peptide spans 1-23; the sequence is MASYLYGVLFAVGLCAPIYCVSP. Residues asparagine 101 and asparagine 390 are each glycosylated (N-linked (GlcNAc...) asparagine).

It belongs to the serpin family. Highly expressed in normal germinal center (GC) B-cells and GC B-cell-derived malignancies.

It localises to the secreted. Its subcellular location is the cytoplasm. The protein resides in the membrane. Its function is as follows. Protease inhibitor that inhibits trypsin and trypsin-like serine proteases (in vitro). Inhibits plasmin and thrombin with lower efficiency (in vitro). This is Serpin A9 (SERPINA9) from Homo sapiens (Human).